The following is a 450-amino-acid chain: Regulator of sigma-E protease RseP (450 aa).

The chain crosses the membrane as a helical span at residues 1 to 21 (MLSFLWDLASFIVALGVLITV). His-22 is a Zn(2+) binding site. Residues 22 to 103 (HEFGHFWVAR…VGQRAAIIAA (82 aa)) are Periplasmic-facing. Glu-23 is a catalytic residue. Residue His-26 participates in Zn(2+) binding. Residues 104 to 124 (GPVANFIFAIFAYWLVFIIGV) traverse the membrane as a helical segment. Residues 125–375 (PGVRPVVGEI…KGAGMTAELG (251 aa)) are Cytoplasmic-facing. PDZ domains are found at residues 127–220 (VRPV…PRGP) and 222–309 (IEPV…PKVI). Residues 376-396 (VVYYLPFLALISVNLGIINLF) traverse the membrane as a helical segment. Topologically, residues 397–429 (PLPVLDGGHLLFLAIEKIKGGPVSERVQDFCYR) are periplasmic. Residues 430–450 (IGSILLVLLMGLALFNDFSRL) form a helical membrane-spanning segment.

The protein belongs to the peptidase M50B family. As to quaternary structure, interacts with RseA; the third transmembrane domain can be cross-linked to the transmembrane domain of RseA. The cofactor is Zn(2+).

It localises to the cell inner membrane. Its activity is regulated as follows. Inhibited by Zn(2+) chelator 1,10-phenanthroline. In terms of biological role, a site-2 regulated intramembrane protease (S2P) that cleaves the peptide bond between 'Ala-108' and 'Cys-109' in the transmembrane region of RseA. Part of a regulated intramembrane proteolysis (RIP) cascade. Acts on DegS-cleaved RseA to release the cytoplasmic domain of RseA, residue 'Val-148' of RseA may be required for this. This provides the cell with sigma-E (RpoE) activity through the proteolysis of RseA. Can also cleave sequences in transmembrane regions of other proteins (such as LacY) as well as liberated signal peptides of beta-lactamase, OmpF, LivK, SecM, PhoA, LivJ, OmpC, Lpp and TorA, probably within the membrane. Cleaves FecR within its transmembrane region to release an N-terminal cytoplasmic fragment which binds to sigma factor FecI, allowing it to activate transcription of the fecABCDE operon which mediates ferric citrate transport. The protein is Regulator of sigma-E protease RseP (rseP) of Escherichia coli (strain K12).